The primary structure comprises 191 residues: Penicillin-binding protein activator LpoB (191 aa).

Residues 1–16 form the signal peptide; the sequence is MKRYLSLALAALVLTG. A lipid anchor (N-palmitoyl cysteine) is attached at Cys17. Residue Cys17 is the site of S-diacylglycerol cysteine attachment.

Belongs to the LpoB family. In terms of assembly, interacts with PBP1b.

The protein resides in the cell outer membrane. In terms of biological role, regulator of peptidoglycan synthesis that is essential for the function of penicillin-binding protein 1B (PBP1b). The chain is Penicillin-binding protein activator LpoB from Yersinia pestis (strain D182038).